The following is a 231-amino-acid chain: tRNA (guanine-N(7)-)-methyltransferase (231 aa).

The S-adenosyl-L-methionine site is built by D57, E82, D109, and D132. The active site involves D132. Substrate is bound by residues K136, D168, and 205–208 (TKFE). Residues 194 to 214 (AFVPPPPPRPQTKFERRGLRK) form a disordered region.

It belongs to the class I-like SAM-binding methyltransferase superfamily. TrmB family.

It carries out the reaction guanosine(46) in tRNA + S-adenosyl-L-methionine = N(7)-methylguanosine(46) in tRNA + S-adenosyl-L-homocysteine. Its pathway is tRNA modification; N(7)-methylguanine-tRNA biosynthesis. Its function is as follows. Catalyzes the formation of N(7)-methylguanine at position 46 (m7G46) in tRNA. This chain is tRNA (guanine-N(7)-)-methyltransferase, found in Halorhodospira halophila (strain DSM 244 / SL1) (Ectothiorhodospira halophila (strain DSM 244 / SL1)).